A 267-amino-acid chain; its full sequence is 2-keto-3-deoxy-L-rhamnonate aldolase (267 aa).

The active-site Proton acceptor is the H49. Substrate is bound at residue Q151. E153 lines the Mg(2+) pocket. The substrate site is built by A178 and D179. A Mg(2+)-binding site is contributed by D179.

It belongs to the HpcH/HpaI aldolase family. KDR aldolase subfamily. Homohexamer. Mg(2+) is required as a cofactor.

The catalysed reaction is 2-dehydro-3-deoxy-L-rhamnonate = (S)-lactaldehyde + pyruvate. Catalyzes the reversible retro-aldol cleavage of 2-keto-3-deoxy-L-rhamnonate (KDR) to pyruvate and lactaldehyde. In Salmonella gallinarum (strain 287/91 / NCTC 13346), this protein is 2-keto-3-deoxy-L-rhamnonate aldolase.